The primary structure comprises 46 residues: Spectrin alpha chain, non-erythrocytic 1 (46 aa).

Spectrin repeat units lie at residues 1–5 (AQLAD), 7–14 (FHLQQFFR), 15–20 (SQLLGS), 21–26 (AHEVQR), 27–35 (LAQFVEHWK), and 39–46 (DLFLTFAK).

The protein belongs to the spectrin family. In terms of assembly, associates with the gamma-tubulin complex in brain, but not in kidney, liver, sperm, or uterus. Like erythrocyte spectrin, the spectrin-like proteins are capable of forming dimers which can further associate to tetramers. Interacts with isoform 1 of ACP1. Interacts with CALM and EMD. Interacts (via C-terminal spectrin repeats) with TRPC4. Identified in a complex with ACTN4, CASK, IQGAP1, MAGI2, NPHS1 and SPTBN1. Interacts with CLN3; this interaction regulates the fodrin localization at the plasma membrane.

Its subcellular location is the cytoplasm. The protein resides in the cytoskeleton. It is found in the cell cortex. Its function is as follows. Fodrin, which seems to be involved in secretion, interacts with calmodulin in a calcium-dependent manner and is thus candidate for the calcium-dependent movement of the cytoskeleton at the membrane. This Capra hircus (Goat) protein is Spectrin alpha chain, non-erythrocytic 1 (SPTAN1).